The following is a 389-amino-acid chain: Na(+)/H(+) antiporter NhaA (389 aa).

Helical transmembrane passes span isoleucine 8 to tryptophan 28, isoleucine 48 to isoleucine 68, methionine 91 to isoleucine 111, glycine 119 to phenylalanine 139, asparagine 173 to leucine 193, alanine 214 to leucine 234, tryptophan 262 to phenylalanine 282, leucine 288 to glycine 308, leucine 327 to valine 347, and glycine 361 to isoleucine 381.

The protein belongs to the NhaA Na(+)/H(+) (TC 2.A.33) antiporter family.

It is found in the cell membrane. The enzyme catalyses Na(+)(in) + 2 H(+)(out) = Na(+)(out) + 2 H(+)(in). In terms of biological role, na(+)/H(+) antiporter that extrudes sodium in exchange for external protons. This chain is Na(+)/H(+) antiporter NhaA, found in Desulfitobacterium hafniense (strain DSM 10664 / DCB-2).